The sequence spans 1044 residues: Sarcoplasmic/endoplasmic reticulum calcium ATPase 2 (1044 aa).

The Cytoplasmic segment spans residues 1–48; sequence MENAHTKTVEEVLGHFGVNESTGLSLEQVKKLKERWGSNELPAEEGKT. S38 carries the phosphoserine modification. A helical membrane pass occupies residues 49–69; sequence LLELVIEQFEDLLVRILLLAA. At 70–89 the chain is on the lumenal side; that stretch reads CISFVLAWFEEGEETITAFV. Residues 90–110 form a helical membrane-spanning segment; that stretch reads EPFVILLILVANAIVGVWQER. At 111-253 the chain is on the cytoplasmic side; the sequence is NAENAIEALK…QERTPLQQKL (143 aa). Residues 254-273 traverse the membrane as a helical segment; that stretch reads DEFGEQLSKVISLICIAVWI. Residues 274-295 are Lumenal-facing; sequence INIGHFNDPVHGGSWIRGAIYY. 3'-nitrotyrosine occurs at positions 294 and 295. The helical transmembrane segment at 296-313 threads the bilayer; that stretch reads FKIAVALAVAAIPEGLPA. V304, A305, I307, and E309 together coordinate Ca(2+). Topologically, residues 314–756 are cytoplasmic; that stretch reads VITTCLALGT…EEGRAIYNNM (443 aa). Residue D351 is the 4-aspartylphosphate intermediate of the active site. Mg(2+) contacts are provided by D351 and T353. Position 353 (T353) interacts with ATP. The residue at position 441 (T441) is a Phosphothreonine. Residues E442, R489, and K514 each contribute to the ATP site. At S531 the chain carries Phosphoserine. R559 contributes to the ATP binding site. Residues 575–594 form an interaction with HAX1 region; that stretch reads MHLEDSANFIKYETNLTFVG. Residue S580 is modified to Phosphoserine. The ATP site is built by T624, G625, and D626. Phosphoserine occurs at positions 661 and 663. Positions 677 and 683 each coordinate ATP. D702 provides a ligand contact to Mg(2+). N705 contacts ATP. The chain crosses the membrane as a helical span at residues 757–776; sequence KQFIRYLISSNVGEVVCIFL. Ca(2+)-binding residues include N767 and E770. At 777 to 786 the chain is on the lumenal side; that stretch reads TAALGFPEAL. Residues 787-807 traverse the membrane as a helical segment; sequence IPVQLLWVNLVTDGLPATALG. The tract at residues 787-807 is interaction with PLN; sequence IPVQLLWVNLVTDGLPATALG. An interaction with TMEM64 and PDIA3 region spans residues 788 to 1044; the sequence is PVQLLWVNLV…DTNFSDMFWS (257 aa). Residues N795, T798, and D799 each coordinate Ca(2+). Over 808–827 the chain is Cytoplasmic; the sequence is FNPPDLDIMNKPPRNPKEPL. Residues 828–850 traverse the membrane as a helical segment; sequence ISGWLFFRYLAIGCYVGAATVGA. At 851–896 the chain is on the lumenal side; that stretch reads AAWWFIAADGGPRVSFYQLSHFLQCKEDNPDFDGVDCAIFESPYPM. C875 and C887 are oxidised to a cystine. A helical transmembrane segment spans residues 897-916; sequence TMALSVLVTIEMCNALNSLS. Residue E907 coordinates Ca(2+). At 917–929 the chain is on the cytoplasmic side; the sequence is ENQSLLRMPPWEN. Residues 930–948 form a helical membrane-spanning segment; it reads IWLVGSICLSMSLHFLILY. Positions 931-942 are interaction with PLN; that stretch reads WLVGSICLSMSL. At 949–963 the chain is on the lumenal side; the sequence is VEPLPLIFQITPLNL. The helical transmembrane segment at 964-984 threads the bilayer; that stretch reads TQWLMVLKISLPVILMDETLK. The Cytoplasmic portion of the chain corresponds to 985 to 1044; sequence FVARNYLEQPGKECVQPATKSSCSLSACTDGISWPFVLLIMPLVVWVYSTDTNFSDMFWS.

Belongs to the cation transport ATPase (P-type) (TC 3.A.3) family. Type IIA subfamily. In terms of assembly, interacts with sarcolipin (SLN); the interaction inhibits ATP2A2 Ca(2+) affinity. Interacts with phospholamban (PLN); the interaction inhibits ATP2A2 Ca(2+) affinity. Interacts with myoregulin (MRLN). Interacts with ARLN and ERLN; the interactions inhibit ATP2A2 Ca(2+) affinity. Interacts with STRIT1/DWORF; the interaction results in activation of ATP2A2. Interacts with the monomeric forms of SLN, PLN, ARLN, ERLN and STRI1/DWORF. Interacts with HAX1. Interacts with S100A8 and S100A9. Interacts with SLC35G1 and STIM1. Interacts with TMEM203. Interacts with TMEM64 and PDIA3. Interacts with TMX1. Interacts with TMX2. Interacts with VMP1; VMP1 competes with PLN and SLN to prevent them from forming an inhibitory complex with ATP2A2. Interacts with ULK1. Interacts with S100A1 in a Ca(2+)-dependent manner. Interacts with TUNAR. Interacts with FLVCR2; this interaction occurs in the absence of heme and promotes ATP2A2 proteasomal degradation; this complex is dissociated upon heme binding. Interacts with FNIP1. As to quaternary structure, interacts with TRAM2 (via C-terminus). The cofactor is Mg(2+). Post-translationally, nitrated under oxidative stress. Nitration on the two tyrosine residues inhibits catalytic activity. In terms of processing, serotonylated on Gln residues by TGM2 in response to hypoxia, leading to its inactivation. As to expression, isoform 2 is highly expressed in heart and slow twitch skeletal muscle. Isoform 2 is widely expressed.

It is found in the endoplasmic reticulum membrane. The protein resides in the sarcoplasmic reticulum membrane. The enzyme catalyses Ca(2+)(in) + ATP + H2O = Ca(2+)(out) + ADP + phosphate + H(+). Has different conformational states with differential Ca2+ affinity. The E1 conformational state (active form) shows high Ca(2+) affinity, while the E2 state exhibits low Ca(2+) affinity. Binding of ATP allosterically increases its affinity for subsequent binding of Ca2+. Reversibly inhibited by phospholamban (PLN) at low calcium concentrations. PLN inhibits ATP2A2 Ca(2+) affinity by disrupting its allosteric activation by ATP. Inhibited by sarcolipin (SLN) and myoregulin (MRLN). The inhibition is blocked by VMP1. Enhanced by STRIT1/DWORF; STRIT1 increases activity by displacing sarcolipin (SLN), phospholamban (PLN) and myoregulin (MRLN). Stabilizes SERCA2 in its E2 state. In terms of biological role, this magnesium-dependent enzyme catalyzes the hydrolysis of ATP coupled with the translocation of calcium from the cytosol to the sarcoplasmic reticulum lumen. Involved in autophagy in response to starvation. Upon interaction with VMP1 and activation, controls ER-isolation membrane contacts for autophagosome formation. Also modulates ER contacts with lipid droplets, mitochondria and endosomes. In coordination with FLVCR2 mediates heme-stimulated switching from mitochondrial ATP synthesis to thermogenesis. Involved in the regulation of the contraction/relaxation cycle. Acts as a regulator of TNFSF11-mediated Ca(2+) signaling pathways via its interaction with TMEM64 which is critical for the TNFSF11-induced CREB1 activation and mitochondrial ROS generation necessary for proper osteoclast generation. Association between TMEM64 and SERCA2 in the ER leads to cytosolic Ca(2+) spiking for activation of NFATC1 and production of mitochondrial ROS, thereby triggering Ca(2+) signaling cascades that promote osteoclast differentiation and activation. The chain is Sarcoplasmic/endoplasmic reticulum calcium ATPase 2 from Mus musculus (Mouse).